A 287-amino-acid polypeptide reads, in one-letter code: Fructose-bisphosphate aldolase (287 aa).

Ser-50 provides a ligand contact to D-glyceraldehyde 3-phosphate. The active-site Proton donor is Asp-85. Zn(2+)-binding residues include His-86, Asp-107, Glu-137, and His-181. Gly-182 provides a ligand contact to dihydroxyacetone phosphate. A Zn(2+)-binding site is contributed by His-209. Dihydroxyacetone phosphate contacts are provided by residues 210 to 212 and 231 to 234; these read GGT and NVNT. 2 positions are modified to phosphothreonine: Thr-212 and Thr-234.

Belongs to the class II fructose-bisphosphate aldolase family. Requires Zn(2+) as cofactor.

The catalysed reaction is beta-D-fructose 1,6-bisphosphate = D-glyceraldehyde 3-phosphate + dihydroxyacetone phosphate. It participates in carbohydrate degradation; glycolysis; D-glyceraldehyde 3-phosphate and glycerone phosphate from D-glucose: step 4/4. Functionally, catalyzes the aldol condensation of dihydroxyacetone phosphate (DHAP or glycerone-phosphate) with glyceraldehyde 3-phosphate (G3P) to form fructose 1,6-bisphosphate (FBP) in gluconeogenesis and the reverse reaction in glycolysis. This Geobacillus stearothermophilus (Bacillus stearothermophilus) protein is Fructose-bisphosphate aldolase (fba).